We begin with the raw amino-acid sequence, 256 residues long: Sorbitol dehydrogenase (256 aa).

NAD(+)-binding positions include 15-17 (RGI), Asp-36, 59-60 (DV), Asn-86, Tyr-152, Lys-156, and 182-187 (PGVVDG). The Proton acceptor role is filled by Tyr-152.

This sequence belongs to the short-chain dehydrogenases/reductases (SDR) family. In terms of assembly, homodimer. May function as a tetramer in vivo.

It catalyses the reaction keto-D-fructose + NADH + H(+) = D-sorbitol + NAD(+). The catalysed reaction is galactitol + NAD(+) = keto-D-tagatose + NADH + H(+). It carries out the reaction L-iditol + NAD(+) = keto-L-sorbose + NADH + H(+). Inhibited by DTT, N-bromosuccinimide and iodoacetic acid. Catalyzes the oxidation of D-sorbitol (D-glucitol) to D-fructose. Can also catalyze the oxidation of galactitol to D-tagatose and the oxidation of L-iditol, with lower efficiency. This is Sorbitol dehydrogenase (polS) from Cereibacter sphaeroides (Rhodobacter sphaeroides).